A 192-amino-acid polypeptide reads, in one-letter code: Phosphoheptose isomerase (192 aa).

The SIS domain occupies 34–192 (LADALGNGKK…LEKRLFGERR (159 aa)). A substrate-binding site is contributed by 49–51 (NGG). 2 residues coordinate Zn(2+): His-58 and Glu-62. Substrate-binding positions include Glu-62, 91-92 (ND), 117-119 (STS), Ser-122, and Gln-169. Zn(2+) is bound by residues Gln-169 and His-177.

The protein belongs to the SIS family. GmhA subfamily. Homotetramer. Zn(2+) is required as a cofactor.

The protein resides in the cytoplasm. The catalysed reaction is 2 D-sedoheptulose 7-phosphate = D-glycero-alpha-D-manno-heptose 7-phosphate + D-glycero-beta-D-manno-heptose 7-phosphate. Its pathway is carbohydrate biosynthesis; D-glycero-D-manno-heptose 7-phosphate biosynthesis; D-glycero-alpha-D-manno-heptose 7-phosphate and D-glycero-beta-D-manno-heptose 7-phosphate from sedoheptulose 7-phosphate: step 1/1. Catalyzes the isomerization of sedoheptulose 7-phosphate in D-glycero-D-manno-heptose 7-phosphate. This Geotalea daltonii (strain DSM 22248 / JCM 15807 / FRC-32) (Geobacter daltonii) protein is Phosphoheptose isomerase.